A 1530-amino-acid polypeptide reads, in one-letter code: Neurexin-1 (1530 aa).

The N-terminal stretch at 1-30 (MGTALVQHGGCCLLCLSLLLLGCWAELGSG) is a signal peptide. The Laminin G-like 1 domain maps to 31–217 (LEFPGAEGQW…PPNSGGGSPC (187 aa)). Residues 31 to 1454 (LEFPGAEGQW…EVIRESSSTT (1424 aa)) lie on the Extracellular side of the membrane. N-linked (GlcNAc...) asparagine glycosylation is found at asparagine 125 and asparagine 190. The disordered stretch occupies residues 196-219 (PVDGSEVKLDEEPPNSGGGSPCEA). An EGF-like 1 domain is found at 213-255 (GGSPCEAGDEGDGGVCLNGGVCSVVDDQAVCDCSRTGFRGKDC). 2 cysteine pairs are disulfide-bonded: cysteine 228-cysteine 243 and cysteine 245-cysteine 255. Laminin G-like domains follow at residues 299-496 (IATF…AFKC) and 503-695 (DPIT…KPSC). Ca(2+) is bound by residues aspartate 345, leucine 362, and methionine 430. Cystine bridges form between cysteine 460/cysteine 496, cysteine 666/cysteine 695, cysteine 703/cysteine 714, cysteine 708/cysteine 723, and cysteine 725/cysteine 735. An EGF-like 2 domain is found at 699–736 (TAKPCLSNPCKNNGMCRDGWNRYVCDCSGTGYLGRSCE). 2 Laminin G-like domains span residues 741 to 914 (VLSY…IDYC) and 928 to 1103 (DPVT…ERGC). Residues aspartate 788 and leucine 805 each coordinate Ca(2+). Asparagine 813 is a glycosylation site (N-linked (GlcNAc...) asparagine). Position 864 (arginine 864) interacts with Ca(2+). Cystine bridges form between cysteine 906-cysteine 914, cysteine 1075-cysteine 1103, cysteine 1110-cysteine 1121, cysteine 1115-cysteine 1130, and cysteine 1132-cysteine 1142. The EGF-like 3 domain occupies 1106 to 1143 (PSTTCQEDSCSNQGVCLQQWDGFSCDCSMTSFSGPLCN). One can recognise a Laminin G-like 6 domain in the interval 1149–1347 (YIFSKGGGQI…DANIAIVGNV (199 aa)). Residues aspartate 1199 and valine 1216 each coordinate Ca(2+). Asparagine 1246 is a glycosylation site (N-linked (GlcNAc...) asparagine). Positions 1298 and 1300 each coordinate Ca(2+). The O-linked (Xyl...) (heparan sulfate) serine glycan is linked to serine 1408. The segment at 1412–1443 (PSDDEDIDPCEPSSGGLANPTRVGGREPYPGS) is disordered. The chain crosses the membrane as a helical span at residues 1455–1475 (GMVVGIVAAAALCILILLYAM). At 1476-1530 (YKYRNRDEGSYHVDESRNYISNSAQSNGAVVKEKQPSSAKSANKNKKNKDKEYYV) the chain is on the cytoplasmic side. The tract at residues 1497 to 1523 (NSAQSNGAVVKEKQPSSAKSANKNKKN) is interaction with CASK. The interval 1497 to 1530 (NSAQSNGAVVKEKQPSSAKSANKNKKNKDKEYYV) is disordered.

Belongs to the neurexin family. As to quaternary structure, interacts (via laminin G-like domain 2 and/or laminin G-like domain 6) with NLGN1 forming a heterotetramer, where one NLGN1 dimer interacts with one NRXN1 dimer. Also interacts (via laminin G-like domain 2 and/or laminin G-like domain 6) with NLGN2, NLGN3 and NLGN4L; interactions with NLGN1, NLGN2, NLGN3 and NLGN4L are calcium-dependent. Interacts (via cytoplasmic C-terminal region) with CASK (via the PDZ, SH3 and guanylate kinase-like domains). Interacts (via cytoplasmic C-terminus) with CASKIN1 and APBA1. Interacts (via laminin G-like domain 2) with NXPH1 and NXPH3. Alpha-type isoforms (neurexin-1-alpha) interact (via laminin G-like domain 2 and/or laminin G-like domain 6) with DAG1 (via alpha-dystroglycan chain). Interacts with LRRTM1, LRRTM2, LRRTM3 and LRRTM4. Interacts with SYT13 and SYTL1. Interacts with CBLN1, CBLN2 and, less avidly, with CBLN4. Interacts with CLSTN3. Alpha-type isoforms interact with alpha-latrotoxin from spider venom. O-glycosylated; contains heparan sulfate. Heparan sulfate attachment is required for synapse development by mediating interactions with neuroligins and LRRTM2. In terms of tissue distribution, brain (neuronal synapse).

The protein localises to the presynaptic cell membrane. In terms of biological role, cell surface protein involved in cell-cell-interactions, exocytosis of secretory granules and regulation of signal transmission. Function is isoform-specific. Alpha-type isoforms have a long N-terminus with six laminin G-like domains and play an important role in synaptic signal transmission. Alpha-type isoforms play a role in the regulation of calcium channel activity and Ca(2+)-triggered neurotransmitter release at synapses and at neuromuscular junctions. They play an important role in Ca(2+)-triggered exocytosis of secretory granules in pituitary gland. They may affect their functions at synapses and in endocrine cells via their interactions with proteins from the exocytotic machinery. Likewise, alpha-type isoforms play a role in regulating the activity of postsynaptic NMDA receptors, a subtype of glutamate-gated ion channels. Both alpha-type and beta-type isoforms may play a role in the formation or maintenance of synaptic junctions via their interactions (via the extracellular domains) with neuroligin family members, CBLN1 or CBLN2. In vitro, triggers the de novo formation of presynaptic structures. May be involved in specification of excitatory synapses. Alpha-type isoforms were first identified as receptors for alpha-latrotoxin from spider venom. The sequence is that of Neurexin-1 (Nrxn1) from Rattus norvegicus (Rat).